Consider the following 238-residue polypeptide: Ribonuclease PH (238 aa).

Phosphate contacts are provided by residues Arg86 and 124–126 (GTR).

The protein belongs to the RNase PH family. In terms of assembly, homohexameric ring arranged as a trimer of dimers.

The enzyme catalyses tRNA(n+1) + phosphate = tRNA(n) + a ribonucleoside 5'-diphosphate. Phosphorolytic 3'-5' exoribonuclease that plays an important role in tRNA 3'-end maturation. Removes nucleotide residues following the 3'-CCA terminus of tRNAs; can also add nucleotides to the ends of RNA molecules by using nucleoside diphosphates as substrates, but this may not be physiologically important. Probably plays a role in initiation of 16S rRNA degradation (leading to ribosome degradation) during starvation. The protein is Ribonuclease PH of Aliivibrio salmonicida (strain LFI1238) (Vibrio salmonicida (strain LFI1238)).